The sequence spans 169 residues: Oleosin Ara h 10.0101 (169 aa).

The next 2 membrane-spanning stretches (helical) occupy residues 39 to 59 (VIAVITGLPIGGTLLLFAGLA) and 73 to 93 (LFILFSPVIVPAIIVVGLSVA). A compositionally biased stretch (basic and acidic residues) spans 146–156 (KDVGQKTKEVG). Positions 146–169 (KDVGQKTKEVGQEIQTKAQDSKRT) are disordered.

It belongs to the oleosin family. Expressed in seeds (at protein level).

Its subcellular location is the lipid droplet. The protein localises to the membrane. Functionally, may have a structural role to stabilize the lipid body during desiccation of the seed by preventing coalescence of the oil. Probably interacts with both lipid and phospholipid moieties of lipid bodies. May also provide recognition signals for specific lipase anchorage in lipolysis during seedling growth. In Arachis hypogaea (Peanut), this protein is Oleosin Ara h 10.0101.